A 1382-amino-acid chain; its full sequence is DNA-directed RNA polymerase subunit beta' (1382 aa).

4 residues coordinate Zn(2+): C70, C72, C85, and C88. Mg(2+) is bound by residues D460, D462, and D464. 4 residues coordinate Zn(2+): C808, C882, C889, and C892.

The protein belongs to the RNA polymerase beta' chain family. The RNAP catalytic core consists of 2 alpha, 1 beta, 1 beta' and 1 omega subunit. When a sigma factor is associated with the core the holoenzyme is formed, which can initiate transcription. The cofactor is Mg(2+). Requires Zn(2+) as cofactor.

It catalyses the reaction RNA(n) + a ribonucleoside 5'-triphosphate = RNA(n+1) + diphosphate. Functionally, DNA-dependent RNA polymerase catalyzes the transcription of DNA into RNA using the four ribonucleoside triphosphates as substrates. This is DNA-directed RNA polymerase subunit beta' from Citrifermentans bemidjiense (strain ATCC BAA-1014 / DSM 16622 / JCM 12645 / Bem) (Geobacter bemidjiensis).